The sequence spans 144 residues: Large ribosomal subunit protein uL13 (144 aa).

This sequence belongs to the universal ribosomal protein uL13 family. As to quaternary structure, part of the 50S ribosomal subunit.

Functionally, this protein is one of the early assembly proteins of the 50S ribosomal subunit, although it is not seen to bind rRNA by itself. It is important during the early stages of 50S assembly. The chain is Large ribosomal subunit protein uL13 from Oleidesulfovibrio alaskensis (strain ATCC BAA-1058 / DSM 17464 / G20) (Desulfovibrio alaskensis).